We begin with the raw amino-acid sequence, 959 residues long: Atromentin synthetase invA1 (959 aa).

The interval 59-466 is adenylation (A) domain; the sequence is DSSIQTKTFS…SGRIKETVIV (408 aa). The Carrier domain maps to 598–676; that stretch reads TPQTETEQTL…SLANYIVALK (79 aa). Positions 603–673 are thiolation and peptide carrier (T) domain; that stretch reads TEQTLAAIYA…VVSSLANYIV (71 aa). Ser-635 is modified (O-(pantetheine 4'-phosphoryl)serine). The interval 699 to 946 is thioesterase (TE) domain; it reads PIFMVHPGVG…LMDFDHVPGF (248 aa).

It belongs to the ATP-dependent AMP-binding enzyme family.

It participates in secondary metabolite biosynthesis. Functionally, an L-tyrosine:2-oxoglutarate aminotransferase (probably invD) and atromentin synthetase invA1 catalyze consecutive steps to turn over L-tyrosine into atromentin, which represents the generic precursor molecule for the entire terphenylquinone and pulvinic acid family of pigments, which are widely distributed secondary metabolites in homobasidiomycetes. The first step catalyzed by the aminotransferase converts L-tyrosine in to 4-hydroxyphenylpyruvate (4-HPP). Adenylation of two 4-HPP monomers by the invA1 adenylation (A) domain, covalent tethering of the monomers as a thioester and oxoester onto the invA1 thiolation (T) and thioesterase (TE) domains, respectively, and symmetric C-C-bond formation between two monomers catalyzed by the invA1 TE domain leads to atromentin. The protein is Atromentin synthetase invA1 (invA1) of Paxillus involutus (Naked brimcap).